We begin with the raw amino-acid sequence, 638 residues long: Intron-encoded RNA maturase bI4 (638 aa).

Positions 1–253 are COB exons 1 to 4 encoded; it reads MAFRKSNVYL…VFYSPNTLGQ (253 aa). A COB intron 4 encoded region spans residues 253–638; that stretch reads QNMALLLITY…LKFNEKWNNN (386 aa).

In the C-terminal section; belongs to the LAGLIDADG endonuclease family. In terms of assembly, forms a ternary complex with intron derived RNA and the imported mitochondrial leucyl-tRNA synthetase NAM2. The proteins do not interact directly with each other. The mature protein may arise from proteolytic cleavage of an in-frame translation of COB exons 1 to 4 plus intron 4, containing the bI4 open reading frame. Cleavage would take place close to the Met-385 resulting in an active maturase of about 30 kDa.

It localises to the mitochondrion. Mitochondrial mRNA maturase required for splicing of intron 4 of the cytochrome b (COB) gene, containing its own coding sequence, and intron 4 in COX1, coding for the related homing endonuclease aI4. In vivo splicing requires in addition the imported mitochondrial leucyl-tRNA synthetase NAM2. Both proteins seem to stimulate the intrinsic ribozyme activity of intron bI4 through binding to and stabilizing specific secondary and tertiary structure elements in the RNA. This Saccharomyces cerevisiae (strain ATCC 204508 / S288c) (Baker's yeast) protein is Intron-encoded RNA maturase bI4 (BI4).